The chain runs to 144 residues: Large ribosomal subunit protein uL16 (144 aa).

Residues 1-17 show a composition bias toward basic residues; sequence MLQPKKTKFRRQQKGRA. The disordered stretch occupies residues 1–22; sequence MLQPKKTKFRRQQKGRAKGNAQ.

It belongs to the universal ribosomal protein uL16 family. In terms of assembly, part of the 50S ribosomal subunit.

Its function is as follows. Binds 23S rRNA and is also seen to make contacts with the A and possibly P site tRNAs. The polypeptide is Large ribosomal subunit protein uL16 (Bacteroides fragilis (strain ATCC 25285 / DSM 2151 / CCUG 4856 / JCM 11019 / LMG 10263 / NCTC 9343 / Onslow / VPI 2553 / EN-2)).